Here is a 299-residue protein sequence, read N- to C-terminus: GTPase Era (299 aa).

Residues Lys5–Glu172 form the Era-type G domain. Residues Gly13–Ser20 form a G1 region. Residue Gly13–Ser20 coordinates GTP. Residues Gln39–Asn43 are G2. Positions Asp60–Gly63 are G3. GTP-binding positions include Asp60–Ile64 and Asn122–Asp125. Residues Asn122–Asp125 are G4. The interval Ile151–Ala153 is G5. The KH type-2 domain occupies Thr203–Lys280.

The protein belongs to the TRAFAC class TrmE-Era-EngA-EngB-Septin-like GTPase superfamily. Era GTPase family. In terms of assembly, monomer.

Its subcellular location is the cytoplasm. It is found in the cell membrane. In terms of biological role, an essential GTPase that binds both GDP and GTP, with rapid nucleotide exchange. Plays a role in 16S rRNA processing and 30S ribosomal subunit biogenesis and possibly also in cell cycle regulation and energy metabolism. The protein is GTPase Era of Staphylococcus haemolyticus (strain JCSC1435).